Reading from the N-terminus, the 88-residue chain is Small ribosomal subunit protein uS15 (88 aa).

This sequence belongs to the universal ribosomal protein uS15 family. Part of the 30S ribosomal subunit. Forms a bridge to the 50S subunit in the 70S ribosome, contacting the 23S rRNA.

One of the primary rRNA binding proteins, it binds directly to 16S rRNA where it helps nucleate assembly of the platform of the 30S subunit by binding and bridging several RNA helices of the 16S rRNA. In terms of biological role, forms an intersubunit bridge (bridge B4) with the 23S rRNA of the 50S subunit in the ribosome. The polypeptide is Small ribosomal subunit protein uS15 (Mycoplasmopsis pulmonis (strain UAB CTIP) (Mycoplasma pulmonis)).